Here is a 562-residue protein sequence, read N- to C-terminus: Bacillolysin (562 aa).

An N-terminal signal peptide occupies residues 1-24; it reads MKKKKQALKVLLSVGILSSSFAFA. The propeptide at 25-245 is activation peptide; the sequence is HTSSAAPNNV…KQAAKPAAKP (221 aa). Ca(2+) is bound by residues D303, D305, and D384. Residue H388 coordinates Zn(2+). Residue E389 is part of the active site. Residues H392 and E412 each coordinate Zn(2+). The Ca(2+) site is built by E423, N429, D431, E433, E436, Y439, T440, and D446. H477 serves as the catalytic Proton donor.

Belongs to the peptidase M4 family. The cofactor is Ca(2+). It depends on Zn(2+) as a cofactor.

It is found in the secreted. It catalyses the reaction Similar, but not identical, to that of thermolysin.. Functionally, extracellular zinc metalloprotease. This Priestia megaterium (strain ATCC 14581 / DSM 32 / CCUG 1817 / JCM 2506 / NBRC 15308 / NCIMB 9376 / NCTC 10342 / NRRL B-14308 / VKM B-512 / Ford 19) (Bacillus megaterium) protein is Bacillolysin.